We begin with the raw amino-acid sequence, 120 residues long: MTREDIIQAIKEMSVLELNELVKACEEEFGVSAAAPVAVAGAVAGGAAEEKTEFDVILASAGANKIKVIKAVREITGLGLKEAKEIVDGAPKTLKEAVSKEEAEDMKAKLAEVGAEVEVK.

It belongs to the bacterial ribosomal protein bL12 family. Homodimer. Part of the ribosomal stalk of the 50S ribosomal subunit. Forms a multimeric L10(L12)X complex, where L10 forms an elongated spine to which 2 to 4 L12 dimers bind in a sequential fashion. Binds GTP-bound translation factors.

Its function is as follows. Forms part of the ribosomal stalk which helps the ribosome interact with GTP-bound translation factors. Is thus essential for accurate translation. The polypeptide is Large ribosomal subunit protein bL12 (Clostridium botulinum (strain Alaska E43 / Type E3)).